The chain runs to 951 residues: Ethylene-overproduction protein 1 (951 aa).

A disordered region spans residues 15–52 (VYALNPSAPTPPPPPGNSSTGGGGGGGSGGGTGGVGDK). Over residues 33-50 (STGGGGGGGSGGGTGGVG) the composition is skewed to gly residues. In terms of domain architecture, BTB spans 242-342 (YDMSFCIGDE…ACDSHLAHLV (101 aa)). TPR repeat units follow at residues 443–476 (QLAYHQLGVVMLERKEYKDAQRWFNAAVEAGHLY), 539–572 (TFPYKFRAVALVEENQFGAAIAELNKILGFKASP), 573–605 (DCLEMRAWISIGMEDYEGALKDIRALLTLEPNF), 698–731 (HERLVYEGWILYDTGHREEALAKAEESISIQRSF), 772–805 (GQALNNLGSVYVDCEKLDLAADCYTNALTIKHTR), 807–837 (HQGLARVYHLKNQRKAAYDEMTKLIEKAQNN), 868–901 (TYPYRYRAAVLMDDHKESEAIDELSRAISFKPDL), and 903–934 (LLHLRAAFYDSMGEGASAIKDCEAALCIDPGH). Positions 815 to 854 (HLKNQRKAAYDEMTKLIEKAQNNASAYEKRSEYCDREMAQ) form a coiled coil.

This sequence belongs to the ETO1 family. As to quaternary structure, interacts with the C-terminal domain of ACS4, ACS5 and ACS9. Interacts with CUL3A. Putative component of a ubiquitin ligase complex containing CUL3. Predominantly expressed in flowers.

It functions in the pathway protein modification; protein ubiquitination. In terms of biological role, essential regulator of the ethylene pathway, which acts by regulating the stability of 1-aminocyclopropane-1-carboxylate synthase (ACS) enzymes. May act as a substrate-specific adapter that connects ACS enzymes, such as ACS5, to ubiquitin ligase complexes, leading to proteasomal degradation of ACS enzymes. The sequence is that of Ethylene-overproduction protein 1 (ETO1) from Arabidopsis thaliana (Mouse-ear cress).